The following is a 240-amino-acid chain: Uridylate kinase (240 aa).

13 to 16 (KASG) serves as a coordination point for ATP. Residues 21–26 (GSQGFG) are involved in allosteric activation by GTP. Glycine 55 provides a ligand contact to UMP. ATP-binding residues include glycine 56 and arginine 60. Residues aspartate 75 and 136 to 143 (TGNPFFTT) each bind UMP. ATP-binding residues include threonine 163, glutamine 164, tyrosine 169, and aspartate 172.

Belongs to the UMP kinase family. As to quaternary structure, homohexamer.

It is found in the cytoplasm. The enzyme catalyses UMP + ATP = UDP + ADP. The protein operates within pyrimidine metabolism; CTP biosynthesis via de novo pathway; UDP from UMP (UMPK route): step 1/1. Its activity is regulated as follows. Allosterically activated by GTP. Inhibited by UTP. In terms of biological role, catalyzes the reversible phosphorylation of UMP to UDP. The sequence is that of Uridylate kinase from Brucella anthropi (strain ATCC 49188 / DSM 6882 / CCUG 24695 / JCM 21032 / LMG 3331 / NBRC 15819 / NCTC 12168 / Alc 37) (Ochrobactrum anthropi).